A 283-amino-acid polypeptide reads, in one-letter code: Agmatinase (283 aa).

Positions 112, 131, 133, 135, 211, and 213 each coordinate a divalent metal cation.

Belongs to the arginase family. Agmatinase subfamily. In terms of assembly, homotetramer. A divalent metal cation serves as cofactor.

The catalysed reaction is agmatine + H2O = urea + putrescine. It functions in the pathway amine and polyamine biosynthesis; putrescine biosynthesis via agmatine pathway; putrescine from agmatine: step 1/1. With respect to regulation, inhibited by putrescine. Activity is not affected by arginine and ornithine. Its function is as follows. Catalyzes the formation of putrescine from agmatine. Cannot use arginine. This chain is Agmatinase, found in Pyrococcus horikoshii (strain ATCC 700860 / DSM 12428 / JCM 9974 / NBRC 100139 / OT-3).